The primary structure comprises 269 residues: Hydroxyacylglutathione hydrolase (269 aa).

Zn(2+)-binding residues include histidine 56, histidine 58, aspartate 60, histidine 61, histidine 115, aspartate 137, and histidine 177.

This sequence belongs to the metallo-beta-lactamase superfamily. Glyoxalase II family. As to quaternary structure, monomer. Requires Zn(2+) as cofactor.

It catalyses the reaction an S-(2-hydroxyacyl)glutathione + H2O = a 2-hydroxy carboxylate + glutathione + H(+). It participates in secondary metabolite metabolism; methylglyoxal degradation; (R)-lactate from methylglyoxal: step 2/2. Its function is as follows. Thiolesterase that catalyzes the hydrolysis of S-D-lactoyl-glutathione to form glutathione and D-lactic acid. This is Hydroxyacylglutathione hydrolase from Leptospira borgpetersenii serovar Hardjo-bovis (strain JB197).